The primary structure comprises 195 residues: dTTP/UTP pyrophosphatase (195 aa).

The Proton acceptor role is filled by aspartate 73.

This sequence belongs to the Maf family. YhdE subfamily. A divalent metal cation serves as cofactor.

The protein localises to the cytoplasm. The enzyme catalyses dTTP + H2O = dTMP + diphosphate + H(+). It catalyses the reaction UTP + H2O = UMP + diphosphate + H(+). Its function is as follows. Nucleoside triphosphate pyrophosphatase that hydrolyzes dTTP and UTP. May have a dual role in cell division arrest and in preventing the incorporation of modified nucleotides into cellular nucleic acids. The protein is dTTP/UTP pyrophosphatase of Desulfotalea psychrophila (strain LSv54 / DSM 12343).